Here is a 474-residue protein sequence, read N- to C-terminus: A-type ATP synthase subunit B (474 aa).

It belongs to the ATPase alpha/beta chains family. Has multiple subunits with at least A(3), B(3), C, D, E, F, H, I and proteolipid K(x).

Its subcellular location is the cell membrane. Its function is as follows. Component of the A-type ATP synthase that produces ATP from ADP in the presence of a proton gradient across the membrane. The B chain is a regulatory subunit. This Halorubrum lacusprofundi (strain ATCC 49239 / DSM 5036 / JCM 8891 / ACAM 34) protein is A-type ATP synthase subunit B.